Here is a 316-residue protein sequence, read N- to C-terminus: Ribosomal RNA small subunit methyltransferase H (316 aa).

S-adenosyl-L-methionine-binding positions include 35–37 (GGH), Asp-55, Phe-79, Asp-101, and Gln-108.

This sequence belongs to the methyltransferase superfamily. RsmH family.

The protein resides in the cytoplasm. It carries out the reaction cytidine(1402) in 16S rRNA + S-adenosyl-L-methionine = N(4)-methylcytidine(1402) in 16S rRNA + S-adenosyl-L-homocysteine + H(+). Functionally, specifically methylates the N4 position of cytidine in position 1402 (C1402) of 16S rRNA. The polypeptide is Ribosomal RNA small subunit methyltransferase H (Vibrio parahaemolyticus serotype O3:K6 (strain RIMD 2210633)).